The following is a 220-amino-acid chain: Protein GrpE (220 aa).

The tract at residues 1-55 (MCGGDVQGQGVASGCDEALERADSLRASDPVPVESGEGSVPGEHSQELETGASEE) is disordered.

The protein belongs to the GrpE family. Homodimer.

It localises to the cytoplasm. In terms of biological role, participates actively in the response to hyperosmotic and heat shock by preventing the aggregation of stress-denatured proteins, in association with DnaK and GrpE. It is the nucleotide exchange factor for DnaK and may function as a thermosensor. Unfolded proteins bind initially to DnaJ; upon interaction with the DnaJ-bound protein, DnaK hydrolyzes its bound ATP, resulting in the formation of a stable complex. GrpE releases ADP from DnaK; ATP binding to DnaK triggers the release of the substrate protein, thus completing the reaction cycle. Several rounds of ATP-dependent interactions between DnaJ, DnaK and GrpE are required for fully efficient folding. This chain is Protein GrpE, found in Treponema pallidum (strain Nichols).